A 511-amino-acid polypeptide reads, in one-letter code: Ribosome biogenesis protein YTM1 (511 aa).

Positions 9-112 (VKVVFVTRDE…EVSLSIEYIR (104 aa)) are ubiquitin-like (UBL) domain. The sufficient for interaction with ERB1 and association with 66S pre-ribosomes stretch occupies residues 122 to 511 (SFSNPDWVAA…IQINNNPQSA (390 aa)). 7 WD repeats span residues 124-168 (SNPD…TGQL), 170-208 (GHNS…YRRK), 248-287 (GHTA…MPAI), 332-372 (GHSA…AVQS), 383-423 (TRST…QVAT), 429-470 (GHTN…SLHV), and 477-511 (TENN…PQSA). Residues 207-228 (RKEPGQVGKKELNYDSEEDSDE) form a disordered region. Residues 208-219 (KEPGQVGKKELN) are compositionally biased toward basic and acidic residues.

It belongs to the WD repeat WDR12/YTM1 family. As to quaternary structure, component of the NOP7 complex, composed of ERB1, NOP7 and YTM1. The complex is held together by ERB1, which interacts with NOP7 via its N-terminal domain and with YTM1 via a high-affinity interaction between the seven-bladed beta-propeller domains of the 2 proteins. The NOP7 complex associates with the 66S pre-ribosome. Interacts (via UBL domain) with MDN1 (via VWFA/MIDAS domain).

It localises to the nucleus. The protein localises to the nucleolus. It is found in the nucleoplasm. Its function is as follows. Component of the NOP7 complex, which is required for maturation of the 25S and 5.8S ribosomal RNAs and formation of the 60S ribosome. This chain is Ribosome biogenesis protein YTM1, found in Yarrowia lipolytica (strain CLIB 122 / E 150) (Yeast).